Here is a 207-residue protein sequence, read N- to C-terminus: Dephospho-CoA kinase (207 aa).

The region spanning 5–202 (VVGLTGGIGS…LQYLKLSAEK (198 aa)) is the DPCK domain. Residue 13 to 18 (GSGKST) participates in ATP binding.

It belongs to the CoaE family.

The protein localises to the cytoplasm. The catalysed reaction is 3'-dephospho-CoA + ATP = ADP + CoA + H(+). The protein operates within cofactor biosynthesis; coenzyme A biosynthesis; CoA from (R)-pantothenate: step 5/5. Functionally, catalyzes the phosphorylation of the 3'-hydroxyl group of dephosphocoenzyme A to form coenzyme A. This chain is Dephospho-CoA kinase, found in Dechloromonas aromatica (strain RCB).